Reading from the N-terminus, the 904-residue chain is Protein translocase subunit SecA (904 aa).

ATP is bound by residues Gln87, 105–109 (GEGKT), and Asp512. The interval 851 to 870 (LARQQQLSHQTDNSALMSEE) is disordered. Residues Cys888, Cys890, Cys899, and His900 each contribute to the Zn(2+) site.

This sequence belongs to the SecA family. Monomer and homodimer. Part of the essential Sec protein translocation apparatus which comprises SecA, SecYEG and auxiliary proteins SecDF-YajC and YidC. Zn(2+) is required as a cofactor.

It is found in the cell inner membrane. The protein resides in the cytoplasm. The enzyme catalyses ATP + H2O + cellular proteinSide 1 = ADP + phosphate + cellular proteinSide 2.. In terms of biological role, part of the Sec protein translocase complex. Interacts with the SecYEG preprotein conducting channel. Has a central role in coupling the hydrolysis of ATP to the transfer of proteins into and across the cell membrane, serving both as a receptor for the preprotein-SecB complex and as an ATP-driven molecular motor driving the stepwise translocation of polypeptide chains across the membrane. The chain is Protein translocase subunit SecA from Yersinia pseudotuberculosis serotype O:1b (strain IP 31758).